A 438-amino-acid polypeptide reads, in one-letter code: Chromosomal replication initiator protein DnaA (438 aa).

The tract at residues 1–68 (MKDNILSALK…VVKESLGKDA (68 aa)) is domain I, interacts with DnaA modulators. Positions 68–98 (ATFEIVYKEIDITQENEEKGPLVRKRPLLIT) are domain II. A domain III, AAA+ region region spans residues 99–314 (PLNPKYTFEN…GAILKLIAYK (216 aa)). Residues Gly142, Gly144, Lys145, and Thr146 each coordinate ATP. The domain IV, binds dsDNA stretch occupies residues 315-438 (NLYGSLNLSI…TKNFAQGESI (124 aa)).

The protein belongs to the DnaA family. As to quaternary structure, oligomerizes as a right-handed, spiral filament on DNA at oriC.

It is found in the cytoplasm. Plays an essential role in the initiation and regulation of chromosomal replication. ATP-DnaA binds to the origin of replication (oriC) to initiate formation of the DNA replication initiation complex once per cell cycle. Binds the DnaA box (a 9 base pair repeat at the origin) and separates the double-stranded (ds)DNA. Forms a right-handed helical filament on oriC DNA; dsDNA binds to the exterior of the filament while single-stranded (ss)DNA is stabiized in the filament's interior. The ATP-DnaA-oriC complex binds and stabilizes one strand of the AT-rich DNA unwinding element (DUE), permitting loading of DNA polymerase. After initiation quickly degrades to an ADP-DnaA complex that is not apt for DNA replication. Binds acidic phospholipids. The protein is Chromosomal replication initiator protein DnaA of Thermosipho africanus (strain TCF52B).